The primary structure comprises 944 residues: Calcium-transporting ATPase type 2C member 2 (944 aa).

The Cytoplasmic segment spans residues 1–104 (MGRRFKFLQK…DNTEPVWKKY (104 aa)). Residues 69 to 93 (VDLDSGLSEFAVAQRRLVHGWNEFV) are interaction with ORAI1. Residues 105-125 (LDQFRNPLILLLLGSSVVSVL) traverse the membrane as a helical segment. Topologically, residues 126 to 127 (TK) are extracellular. Residues 128–148 (EYEDAISIALAVLIVVTVGFI) traverse the membrane as a helical segment. The Cytoplasmic portion of the chain corresponds to 149–229 (QEYRSEKSLE…EVEPCSKTDS (81 aa)). Residues 230 to 250 (PLAGGGDLSTLSNVVFMGTLV) form a helical membrane-spanning segment. Over 251 to 291 (QCGKGQGVVIGTGEQSQFGEVFKMMRAEETPKTPLQKSMDK) the chain is Extracellular. T262 bears the Phosphothreonine mark. A Phosphoserine modification is found at S266. The chain crosses the membrane as a helical span at residues 292–312 (LGKQLTVFSFGIIGLLMLVGW). The Cytoplasmic portion of the chain corresponds to 313–329 (VQGKPLLSMFTIGVSLA). Ca(2+)-binding residues include V330, A331, I333, and E335. Residues 330-350 (VAAIPEGLPIVVMVTLVLGVL) traverse the membrane as a helical segment. Residues 351-748 (RMAKKRVIVK…IAALSLITLS (398 aa)) are Extracellular-facing. Catalysis depends on D377, which acts as the 4-aspartylphosphate intermediate. Mg(2+) is bound by residues D672 and D676. A helical transmembrane segment spans residues 749–769 (TVCNLPNPLNAMQILWVNIIM). Residues N766 and D770 each coordinate Ca(2+). The Cytoplasmic portion of the chain corresponds to 770-802 (DGPPAQSLGVEPVDRDALKRPPRSVKDTILNRA). A helical transmembrane segment spans residues 803–823 (LILKILMSAAVILGGTLFIFW). Topologically, residues 824-835 (REIPENRTSTPR) are extracellular. A helical membrane pass occupies residues 836–853 (TTTMAFTCFVFFDLFNAL). Over 854–872 (SCRSQTKLIFEIGFFRNRM) the chain is Cytoplasmic. The chain crosses the membrane as a helical span at residues 873-893 (FLYSILGSLLGQLAVIYAPPL). Topologically, residues 894–903 (QKVFQTENLS) are extracellular. The helical transmembrane segment at 904–924 (ALDLLLLTGLASSVFILSELL) threads the bilayer. Topologically, residues 925–944 (KLCEKFCSRAKADQMLPEAV) are cytoplasmic.

It belongs to the cation transport ATPase (P-type) (TC 3.A.3) family. Type IIA subfamily. Interacts (via N-terminus) with ORAI1 (via N- and C-termini); this interaction regulates Ca(2+) influx at the plasma membrane.

It is found in the golgi apparatus. Its subcellular location is the trans-Golgi network membrane. The protein resides in the cell membrane. It localises to the basolateral cell membrane. It carries out the reaction Ca(2+)(in) + ATP + H2O = Ca(2+)(out) + ADP + phosphate + H(+). The catalysed reaction is Mn(2+)(in) + ATP + H2O = Mn(2+)(out) + ADP + phosphate + H(+). Functionally, ATP-driven pump that supplies the Golgi apparatus with Ca(2+) and Mn(2+) ions, both essential cofactors for processing and trafficking of newly synthesized proteins in the secretory pathway. Within a catalytic cycle, acquires Ca(2+) or Mn(2+) ions on the cytoplasmic side of the membrane and delivers them to the lumenal side. The transfer of ions across the membrane is coupled to ATP hydrolysis and is associated with a transient phosphorylation that shifts the pump conformation from inward-facing to outward-facing state. Induces Ca(2+) influx independently of its ATP-driven pump function. At the basolateral membrane of mammary epithelial cells, interacts with Ca(2+) channel ORAI1 and mediates Ca(2+) entry independently of the Ca(2+) content of endoplasmic reticulum or Golgi stores. May facilitate transepithelial transport of large quantities of Ca(2+) for milk secretion via activation of Ca(2+) influx channels at the plasma membrane and active Ca(2+) transport at the Golgi apparatus. This is Calcium-transporting ATPase type 2C member 2 (Atp2c2) from Rattus norvegicus (Rat).